Reading from the N-terminus, the 330-residue chain is Olfactory receptor 5P73 (330 aa).

Over 1–28 the chain is Extracellular; it reads MAFLEDGNHTTVTEFFLLGLTDDPVLRD. Asn8 carries N-linked (GlcNAc...) asparagine glycosylation. The chain crosses the membrane as a helical span at residues 29-49; that stretch reads ILFIIILCIYLVTVSGNLSTI. Over 50-57 the chain is Cytoplasmic; the sequence is LLIRVSSQ. A helical transmembrane segment spans residues 58-78; the sequence is LHHPMYFILSHLASVDIGISS. Residues 79-102 lie on the Extracellular side of the membrane; the sequence is SVTPNMLATFLVKQNTISYIGCSI. A disulfide bridge links Cys100 with Cys192. Residues 103–123 form a helical membrane-spanning segment; sequence QFTSAAFFGTVECFLLATMAY. At 124-136 the chain is on the cytoplasmic side; it reads DRFVAICNPLLYS. Residues 137-157 form a helical membrane-spanning segment; that stretch reads TKMSTEACIQLVVGSYIQGFL. At 158 to 199 the chain is on the extracellular side; that stretch reads NASFFTLSFFSLFFCGPNRINDFYCDFAPLLELSCSDVTVAV. A helical membrane pass occupies residues 200–220; sequence VITSISAGFITLTTVFVIAIS. Residues 221–240 are Cytoplasmic-facing; that stretch reads YSCIFITIMKMHSTESRCKA. A helical transmembrane segment spans residues 241 to 261; the sequence is FSTCTSHLTAVILFYGTAIFI. At 262–274 the chain is on the extracellular side; that stretch reads YVMPKSSYSTDQN. Residues 275–295 traverse the membrane as a helical segment; the sequence is KVLSIFYTVVIPMLNPLIYSL. Over 296–330 the chain is Cytoplasmic; it reads RNNEIKEALKRHLGKKVFSYGNLFCKTHYNHNYPV.

The protein belongs to the G-protein coupled receptor 1 family.

It is found in the cell membrane. Functionally, potential odorant receptor. The polypeptide is Olfactory receptor 5P73 (Mus musculus (Mouse)).